The following is a 194-amino-acid chain: Ribosome maturation factor RimM (194 aa).

The PRC barrel domain occupies 92–190 (DDGYYDHELI…ALVVTPPEGL (99 aa)).

Belongs to the RimM family. In terms of assembly, binds ribosomal protein uS19.

The protein resides in the cytoplasm. An accessory protein needed during the final step in the assembly of 30S ribosomal subunit, possibly for assembly of the head region. Essential for efficient processing of 16S rRNA. May be needed both before and after RbfA during the maturation of 16S rRNA. It has affinity for free ribosomal 30S subunits but not for 70S ribosomes. This is Ribosome maturation factor RimM from Corynebacterium urealyticum (strain ATCC 43042 / DSM 7109).